The chain runs to 236 residues: Biosynthetic peptidoglycan transglycosylase (236 aa).

The helical transmembrane segment at 20–40 (LVFIVLSVLILPYALIGLYLL) threads the bilayer.

This sequence belongs to the glycosyltransferase 51 family.

It is found in the cell inner membrane. The catalysed reaction is [GlcNAc-(1-&gt;4)-Mur2Ac(oyl-L-Ala-gamma-D-Glu-L-Lys-D-Ala-D-Ala)](n)-di-trans,octa-cis-undecaprenyl diphosphate + beta-D-GlcNAc-(1-&gt;4)-Mur2Ac(oyl-L-Ala-gamma-D-Glu-L-Lys-D-Ala-D-Ala)-di-trans,octa-cis-undecaprenyl diphosphate = [GlcNAc-(1-&gt;4)-Mur2Ac(oyl-L-Ala-gamma-D-Glu-L-Lys-D-Ala-D-Ala)](n+1)-di-trans,octa-cis-undecaprenyl diphosphate + di-trans,octa-cis-undecaprenyl diphosphate + H(+). It functions in the pathway cell wall biogenesis; peptidoglycan biosynthesis. Peptidoglycan polymerase that catalyzes glycan chain elongation from lipid-linked precursors. The chain is Biosynthetic peptidoglycan transglycosylase from Rhizobium meliloti (strain 1021) (Ensifer meliloti).